The primary structure comprises 306 residues: Pseudouridine-5'-phosphate glycosidase (306 aa).

The Proton donor role is filled by E28. 2 residues coordinate substrate: K89 and V109. A Mn(2+)-binding site is contributed by D139. 141–143 is a substrate binding site; it reads SAD. The Nucleophile role is filled by K160.

Belongs to the pseudouridine-5'-phosphate glycosidase family. Homotrimer. Requires Mn(2+) as cofactor.

The catalysed reaction is D-ribose 5-phosphate + uracil = psi-UMP + H2O. Its function is as follows. Catalyzes the reversible cleavage of pseudouridine 5'-phosphate (PsiMP) to ribose 5-phosphate and uracil. Functions biologically in the cleavage direction, as part of a pseudouridine degradation pathway. The polypeptide is Pseudouridine-5'-phosphate glycosidase (Gemmatimonas aurantiaca (strain DSM 14586 / JCM 11422 / NBRC 100505 / T-27)).